Reading from the N-terminus, the 343-residue chain is D-alanine--D-alanine ligase (343 aa).

Positions 129 to 335 (KYVLEHFNIK…YSKLIDELIE (207 aa)) constitute an ATP-grasp domain. 162–217 (ENKLGYAVFIKPSNSGSSVGITKAHNRKELEAGLEEAMKYDRKILVEEALNAREIE) is a binding site for ATP. Residues Asp288, Glu302, and Asn304 each coordinate Mg(2+).

This sequence belongs to the D-alanine--D-alanine ligase family. Mg(2+) serves as cofactor. The cofactor is Mn(2+).

It is found in the cytoplasm. It carries out the reaction 2 D-alanine + ATP = D-alanyl-D-alanine + ADP + phosphate + H(+). Its pathway is cell wall biogenesis; peptidoglycan biosynthesis. Functionally, cell wall formation. The sequence is that of D-alanine--D-alanine ligase from Clostridium acetobutylicum (strain ATCC 824 / DSM 792 / JCM 1419 / IAM 19013 / LMG 5710 / NBRC 13948 / NRRL B-527 / VKM B-1787 / 2291 / W).